Reading from the N-terminus, the 276-residue chain is Putative glycosyltransferase 6 domain-containing protein 1 (276 aa).

Residues 1–6 are Cytoplasmic-facing; it reads MNSKRM. Residues 7 to 23 form a helical; Signal-anchor for type II membrane protein membrane-spanning segment; that stretch reads LLLVLFAFSLMLVERYF. The Lumenal segment spans residues 24–276; that stretch reads RNHQVEELRL…NKYFYLNKPT (253 aa). Asn-74 is a glycosylation site (N-linked (GlcNAc...) asparagine). Residues 82-87, 173-175, and 195-198 each bind substrate; these read FATGRF, AAN, and HAWW. The Nucleophile role is filled by Glu-263.

This sequence belongs to the glycosyltransferase 6 family. Mn(2+) is required as a cofactor. As to expression, expressed in both healthy and inflamed gingival tissue samples at similar levels, with higher expression in the gingival connective tissue compared to gingival epithelium. Strongest expression in testis, followed by leukocytes.

It localises to the membrane. This Homo sapiens (Human) protein is Putative glycosyltransferase 6 domain-containing protein 1 (GLT6D1).